The chain runs to 370 residues: Actin-related protein 2/3 complex subunit 1A (370 aa).

6 WD repeats span residues 6–45, 50–89, 140–179, 202–241, 244–284, and 322–365; these read FLLEPITCHAWNRDRTQIALSPNNHEVHIYKKNGGQWVKA, EHNGHITGIDWAPKSDRIVTCGADRNAYVWSQKDGVWKPT, PIRSTVLSLDWHPNNVLLAAGSCDFKCRVFSAYIKEVDEK, GTGGWVHGVSFSASGSRLAWVSHDSTVSVADASKSVQVST, TEFL…TFVS, and LHQN…SSIQ.

This sequence belongs to the WD repeat ARPC1 family. As to quaternary structure, probable component of the Arp2/3 complex in which it may replace ARPC1B.

The protein localises to the cytoplasm. It is found in the cytoskeleton. Its subcellular location is the nucleus. Functionally, probably functions as a component of the Arp2/3 complex which is involved in regulation of actin polymerization and together with an activating nucleation-promoting factor (NPF) mediates the formation of branched actin networks. In addition to its role in the cytoplasmic cytoskeleton, the Arp2/3 complex also promotes actin polymerization in the nucleus, thereby regulating gene transcription and repair of damaged DNA. This chain is Actin-related protein 2/3 complex subunit 1A (ARPC1A), found in Bos taurus (Bovine).